The chain runs to 189 residues: Inner membrane-spanning protein YciB (189 aa).

The next 5 membrane-spanning stretches (helical) occupy residues 23–43 (ILLA…FVWW), 54–74 (ITLA…DAAF), 82–102 (VNWL…KTLI), 120–140 (LNLA…YVFK), and 150–170 (FKLF…GVYL).

It belongs to the YciB family.

It is found in the cell inner membrane. Plays a role in cell envelope biogenesis, maintenance of cell envelope integrity and membrane homeostasis. The chain is Inner membrane-spanning protein YciB from Chromohalobacter salexigens (strain ATCC BAA-138 / DSM 3043 / CIP 106854 / NCIMB 13768 / 1H11).